A 298-amino-acid chain; its full sequence is GPN-loop GTPase QQT1 (298 aa).

Residue 12–17 (GSGKTT) coordinates GTP. The Gly-Pro-Asn (GPN)-loop; involved in dimer interface motif lies at 69–71 (GPN). A GTP-binding site is contributed by 173-176 (SKID).

Belongs to the GPN-loop GTPase family. In terms of assembly, heterodimer with QQT2. As to expression, expressed in vascular tissues, root tips, apical and root meristematic regions, and floral primordia.

The protein resides in the cytoplasm. The protein localises to the nucleus. It is found in the cytoskeleton. Its subcellular location is the spindle. It localises to the phragmoplast. In terms of biological role, small GTPase that is essential for the correct formation of the tangential divisions in early embryos. Associates with microtubule during mitosis and may function in the positioning of the division plane. May participate in the patterning of the early embryo at the octant-dermatogen transition. Is crucial for normal development of the plant. This chain is GPN-loop GTPase QQT1, found in Arabidopsis thaliana (Mouse-ear cress).